Here is a 368-residue protein sequence, read N- to C-terminus: Reverse transcriptase-like protein (368 aa).

The Reverse transcriptase domain occupies 91–318; the sequence is TRELTVPYWY…SELNWLGHKV (228 aa).

The protein resides in the mitochondrion. The chain is Reverse transcriptase-like protein (RTL) from Chlamydomonas reinhardtii (Chlamydomonas smithii).